A 99-amino-acid polypeptide reads, in one-letter code: DNA-directed RNA polymerase subunit omega (99 aa).

The protein belongs to the RNA polymerase subunit omega family. The RNAP catalytic core consists of 2 alpha, 1 beta, 1 beta' and 1 omega subunit. When a sigma factor is associated with the core the holoenzyme is formed, which can initiate transcription.

The enzyme catalyses RNA(n) + a ribonucleoside 5'-triphosphate = RNA(n+1) + diphosphate. Promotes RNA polymerase assembly. Latches the N- and C-terminal regions of the beta' subunit thereby facilitating its interaction with the beta and alpha subunits. This chain is DNA-directed RNA polymerase subunit omega, found in Deinococcus geothermalis (strain DSM 11300 / CIP 105573 / AG-3a).